Here is a 255-residue protein sequence, read N- to C-terminus: Zinc import ATP-binding protein ZnuC (255 aa).

One can recognise an ABC transporter domain in the interval 4-219 (VDVDGLSLRY…PEYRALFGTG (216 aa)). An ATP-binding site is contributed by 36–43 (GPNGSGKT). The segment at 234 to 255 (EHDHHDGCAHGQATEDRTEAAE) is disordered.

It belongs to the ABC transporter superfamily. Zinc importer (TC 3.A.1.15.5) family. The complex is composed of two ATP-binding proteins (ZnuC), two transmembrane proteins (ZnuB) and a solute-binding protein (ZnuA).

The protein resides in the cell inner membrane. The catalysed reaction is Zn(2+)(out) + ATP(in) + H2O(in) = Zn(2+)(in) + ADP(in) + phosphate(in) + H(+)(in). Its function is as follows. Part of the ABC transporter complex ZnuABC involved in zinc import. Responsible for energy coupling to the transport system. This Roseobacter denitrificans (strain ATCC 33942 / OCh 114) (Erythrobacter sp. (strain OCh 114)) protein is Zinc import ATP-binding protein ZnuC.